A 271-amino-acid polypeptide reads, in one-letter code: 3-methyl-2-oxobutanoate hydroxymethyltransferase (271 aa).

Mg(2+) contacts are provided by Asp-53 and Asp-92. 3-methyl-2-oxobutanoate contacts are provided by residues 53–54, Asp-92, and Lys-120; that span reads DS. Mg(2+) is bound at residue Glu-122. The active-site Proton acceptor is Glu-189.

The protein belongs to the PanB family. As to quaternary structure, homodecamer; pentamer of dimers. Mg(2+) is required as a cofactor.

The protein resides in the cytoplasm. It catalyses the reaction 3-methyl-2-oxobutanoate + (6R)-5,10-methylene-5,6,7,8-tetrahydrofolate + H2O = 2-dehydropantoate + (6S)-5,6,7,8-tetrahydrofolate. It functions in the pathway cofactor biosynthesis; (R)-pantothenate biosynthesis; (R)-pantoate from 3-methyl-2-oxobutanoate: step 1/2. Its function is as follows. Catalyzes the reversible reaction in which hydroxymethyl group from 5,10-methylenetetrahydrofolate is transferred onto alpha-ketoisovalerate to form ketopantoate. The protein is 3-methyl-2-oxobutanoate hydroxymethyltransferase of Paraburkholderia phymatum (strain DSM 17167 / CIP 108236 / LMG 21445 / STM815) (Burkholderia phymatum).